The following is a 694-amino-acid chain: Elongation factor G 2 (694 aa).

The region spanning 5–280 (SKYRNIGIFA…AVVDYLPSPT (276 aa)) is the tr-type G domain. GTP-binding positions include 14 to 21 (AHVDAGKT), 78 to 82 (DTPGH), and 132 to 135 (NKLD).

It belongs to the TRAFAC class translation factor GTPase superfamily. Classic translation factor GTPase family. EF-G/EF-2 subfamily.

The protein resides in the cytoplasm. Functionally, catalyzes the GTP-dependent ribosomal translocation step during translation elongation. During this step, the ribosome changes from the pre-translocational (PRE) to the post-translocational (POST) state as the newly formed A-site-bound peptidyl-tRNA and P-site-bound deacylated tRNA move to the P and E sites, respectively. Catalyzes the coordinated movement of the two tRNA molecules, the mRNA and conformational changes in the ribosome. This Pseudoalteromonas translucida (strain TAC 125) protein is Elongation factor G 2.